The following is a 527-amino-acid chain: Glucose transporter 1B/1C/1D/1F/2B (527 aa).

The disordered stretch occupies residues 1–22; sequence MTERRDNVSHAPDAIEGPNDGA. Residues 1-43 are Cytoplasmic-facing; it reads MTERRDNVSHAPDAIEGPNDGAHAEDTSPGFFSLENLGVAQVQ. Residues 44-64 traverse the membrane as a helical segment; the sequence is VVGGTLNGYVIGYVAVYLLLY. The Extracellular portion of the chain corresponds to 65 to 118; sequence LTATECKFTTEGACGGRKIYGCKWSGTTCKFENPKCSEGSDPSDSCKNEVAYTS. The helical transmembrane segment at 119–139 threads the bilayer; the sequence is VYSGIFACAMIVGSMVGSIIA. The Cytoplasmic segment spans residues 140 to 151; sequence GKCITTFGLKKS. Residues 152–172 traverse the membrane as a helical segment; that stretch reads FIIVSITCTIACVVVQVAIEY. Over 173 to 175 the chain is Extracellular; sequence NNY. The chain crosses the membrane as a helical span at residues 176 to 196; sequence YALCTGRVLIGLGVGILCSVF. Residues 197–213 are Cytoplasmic-facing; it reads PMYVNENAHPKLCKMDG. Residues 214-234 traverse the membrane as a helical segment; that stretch reads VLFQVFTTLGIMLAAMLGLIL. Residues 235–249 lie on the Extracellular side of the membrane; it reads DKTGASKEEANMAGR. The chain crosses the membrane as a helical span at residues 250 to 270; sequence LHVFSAVPLGLSVAMFLVGMF. Residues 271 to 299 lie on the Cytoplasmic side of the membrane; that stretch reads LRESTATFAQDDDGKADGGMDPNEYGWGQ. The chain crosses the membrane as a helical span at residues 300 to 320; it reads MLWPLFMGAVTAGTLQLTGIN. Residues 321-338 are Extracellular-facing; sequence AVMNYAPKITENLGMDPS. The chain crosses the membrane as a helical span at residues 339 to 359; sequence LGNFLVMAWNFVTSLVAIPLA. Residues 360–372 lie on the Cytoplasmic side of the membrane; the sequence is SRFTMRQMFITCS. A helical transmembrane segment spans residues 373–393; that stretch reads FVASCMCLFLCGIPVFPGVAG. Residues 394–403 are Extracellular-facing; that stretch reads KEVKNGVATT. A helical transmembrane segment spans residues 404-424; that stretch reads GIALFIAAFEFGVGSCFFVLA. At 425–436 the chain is on the cytoplasmic side; the sequence is QDLFPPSFRPKG. The chain crosses the membrane as a helical span at residues 437 to 457; sequence GSFVVMMQFIFNILINLLYPI. Residues 458–475 are Extracellular-facing; the sequence is TTEAISGGATGNQDKGQA. The chain crosses the membrane as a helical span at residues 476–496; that stretch reads VAFILFGLIGLICSVLQFFYL. The Cytoplasmic portion of the chain corresponds to 497–527; the sequence is YPYDANQDHENDHGGEPVEQKTYPVEASPRN. A compositionally biased stretch (basic and acidic residues) spans 506 to 515; the sequence is ENDHGGEPVE. Residues 506–527 form a disordered region; it reads ENDHGGEPVEQKTYPVEASPRN.

This sequence belongs to the major facilitator superfamily. Sugar transporter (TC 2.A.1.1) family.

It localises to the membrane. Facilitative glucose transporter. This is Glucose transporter 1B/1C/1D/1F/2B (THT1B) from Trypanosoma brucei brucei.